A 425-amino-acid polypeptide reads, in one-letter code: MLDLKLLQRSPEVVAKALADRGSSLDMAEFTALDERRRALLAEVEALKGERNKASGEVARMKRAGEDAAPLLERLSGLSDRIKDLDRETEEVKAAVNDWLLAVPNIPDASVPFGRSEADNPEVLRWGEPRAFSFAPKEHWEIGTALGGLDFERAGKLAGSRFAVYRTWAARMERALANFFLDTHVTEHGYVEIIPPFMVNRKTMTGTGQLPKFEEDLFKLEGWDYFLIPTAEVPLTNLHADDVLEEAQLPMGYAAMTPCFRSEAGSYGKDTRGLIRQHQFTKVEMVRFAHPERSFDELEKMRGHAEVLLQRLGLPYRVITLCTGDMGFSSAKTYDIEVWLPGQNAYREISSCSNCGDFQARRAGIRFRPAGGGKPEFAHTLNGSGLAVGRALVAVIENYQQEDGSVVIPEVLRPYMGGMERVTAE.

230–232 serves as a coordination point for L-serine; sequence TAE. 261 to 263 is a binding site for ATP; that stretch reads RSE. Glutamate 284 lines the L-serine pocket. 348–351 serves as a coordination point for ATP; the sequence is EISS. L-serine is bound at residue serine 384.

It belongs to the class-II aminoacyl-tRNA synthetase family. Type-1 seryl-tRNA synthetase subfamily. In terms of assembly, homodimer. The tRNA molecule binds across the dimer.

It is found in the cytoplasm. The catalysed reaction is tRNA(Ser) + L-serine + ATP = L-seryl-tRNA(Ser) + AMP + diphosphate + H(+). The enzyme catalyses tRNA(Sec) + L-serine + ATP = L-seryl-tRNA(Sec) + AMP + diphosphate + H(+). Its pathway is aminoacyl-tRNA biosynthesis; selenocysteinyl-tRNA(Sec) biosynthesis; L-seryl-tRNA(Sec) from L-serine and tRNA(Sec): step 1/1. In terms of biological role, catalyzes the attachment of serine to tRNA(Ser). Is also able to aminoacylate tRNA(Sec) with serine, to form the misacylated tRNA L-seryl-tRNA(Sec), which will be further converted into selenocysteinyl-tRNA(Sec). The polypeptide is Serine--tRNA ligase (Nitratidesulfovibrio vulgaris (strain DSM 19637 / Miyazaki F) (Desulfovibrio vulgaris)).